Reading from the N-terminus, the 332-residue chain is MNITTLTNSISTSSFSPNNTNGSSTETVNSDIKTTTSSHPVSSLTMLNDTLHNIRTTNQALKKELSQKTLTKTSLEEIALHSSQISMDVNKSAQLLDILSRNEYPINKDARELLHSAPKEAELDGDQMISHRELWAKIANSINDINEQYLKVYEHAVSSYTQMYQDFSAVLSSLAGWISPGGNDGNSVKLQVNSLKKALEELKEKYKDKPLYPANNTVSQEQANKWLTELGGTIGKVSQKNGGYVVSINMTPIDNMLKSLDNLGGNGEVVLDNAKYQAWNAGFSAEDETMKNNLQTLVQKYSNANSIFDNLVKVLSSTISSCTDTDKLFLHF.

Over residues 1–25 the composition is skewed to low complexity; the sequence is MNITTLTNSISTSSFSPNNTNGSST. The segment at 1–43 is disordered; that stretch reads MNITTLTNSISTSSFSPNNTNGSSTETVNSDIKTTTSSHPVSS. Over residues 26-43 the composition is skewed to polar residues; sequence ETVNSDIKTTTSSHPVSS. Positions 44-77 form a coiled coil; sequence LTMLNDTLHNIRTTNQALKKELSQKTLTKTSLEE. Residues 192-267 are ipaB binding; sequence VNSLKKALEE…KSLDNLGGNG (76 aa).

This sequence belongs to the invasin protein D family.

It is found in the secreted. Required for bacterial invasion of host cells. Controls IpaB and IpaC secretion, and the efficiency with which they are physically inserted into target cell membranes. These proteins are exported via T3SS to form a pore in the host membrane that allows the translocation of the other effectors into the host cytoplasm. Along with IpaB, is essential for both blocking secretion through the Mxi/Spa translocon in the absence of a secretion-inducing signal, and for controlling the level of secretion in the presence of this signal. This Shigella flexneri protein is Invasin IpaD (ipaD).